The sequence spans 401 residues: Elongation factor Tu 2 (401 aa).

One can recognise a tr-type G domain in the interval 10–209; it reads KPHVNVGTIG…AVDEYIPTPV (200 aa). The G1 stretch occupies residues 19-26; sequence GHVDHGKT. Residue 19–26 participates in GTP binding; it reads GHVDHGKT. Thr26 contacts Mg(2+). The interval 60–64 is G2; the sequence is GITIA. The G3 stretch occupies residues 81 to 84; the sequence is DCPG. Residues 81–85 and 136–139 each bind GTP; these read DCPGH and NKVD. The interval 136-139 is G4; that stretch reads NKVD. A G5 region spans residues 174–176; the sequence is SAL.

This sequence belongs to the TRAFAC class translation factor GTPase superfamily. Classic translation factor GTPase family. EF-Tu/EF-1A subfamily. Monomer.

Its subcellular location is the cytoplasm. The enzyme catalyses GTP + H2O = GDP + phosphate + H(+). In terms of biological role, GTP hydrolase that promotes the GTP-dependent binding of aminoacyl-tRNA to the A-site of ribosomes during protein biosynthesis. This Roseiflexus castenholzii (strain DSM 13941 / HLO8) protein is Elongation factor Tu 2.